We begin with the raw amino-acid sequence, 452 residues long: Ribosomal protein uS12 methylthiotransferase RimO (452 aa).

The region spanning 5-116 is the MTTase N-terminal domain; it reads PTIAFSHLGC…IVDVLQRTES (112 aa). Residues Cys-14, Cys-50, Cys-79, Cys-154, Cys-158, and Cys-161 each coordinate [4Fe-4S] cluster. The 230-residue stretch at 140 to 369 folds into the Radical SAM core domain; sequence TTTSAVAYLR…MATQQPIAER (230 aa). The TRAM domain maps to 372-438; the sequence is RAQIGRLVDV…IYDLHGEVAS (67 aa).

This sequence belongs to the methylthiotransferase family. RimO subfamily. It depends on [4Fe-4S] cluster as a cofactor.

The protein localises to the cytoplasm. The catalysed reaction is L-aspartate(89)-[ribosomal protein uS12]-hydrogen + (sulfur carrier)-SH + AH2 + 2 S-adenosyl-L-methionine = 3-methylsulfanyl-L-aspartate(89)-[ribosomal protein uS12]-hydrogen + (sulfur carrier)-H + 5'-deoxyadenosine + L-methionine + A + S-adenosyl-L-homocysteine + 2 H(+). Functionally, catalyzes the methylthiolation of an aspartic acid residue of ribosomal protein uS12. The polypeptide is Ribosomal protein uS12 methylthiotransferase RimO (Synechococcus elongatus (strain ATCC 33912 / PCC 7942 / FACHB-805) (Anacystis nidulans R2)).